Reading from the N-terminus, the 391-residue chain is Transforming growth factor beta-1 proprotein (391 aa).

The N-terminal stretch at 1-18 (MDPSPLLALLLLLGAARA) is a signal peptide. The interval 19 to 63 (LSTCQRLDLEAAKKKRIEAVRGQILSKLRLTAPPPASETPPRPLP) is straightjacket domain. The arm domain stretch occupies residues 64–270 (DDVRALYNST…ALPAERANEL (207 aa)). N-linked (GlcNAc...) asparagine glycans are attached at residues Asn71, Asn126, and Asn171. Residues 221–249 (EMGPGHADEMRISIEGFEQQRGDMQSIAK) form a bowtie tail region. Residues 241–243 (RGD) carry the Cell attachment site motif. 4 disulfide bridges follow: Cys284–Cys295, Cys294–Cys357, Cys323–Cys388, and Cys327–Cys390.

The protein belongs to the TGF-beta family. Latency-associated peptide: Homodimer; disulfide-linked. Latency-associated peptide: Interacts with Transforming growth factor beta-1 (TGF-beta-1) chain; interaction is non-covalent and maintains (TGF-beta-1) in a latent state; each Latency-associated peptide (LAP) monomer interacts with TGF-beta-1 in the other monomer. Transforming growth factor beta-1: Homodimer; disulfide-linked. Transforming growth factor beta-1: Interacts with TGF-beta receptors (TGFBR1 and TGFBR2), leading to signal transduction. Post-translationally, transforming growth factor beta-1 proprotein: The precursor proprotein is cleaved in the Golgi apparatus to form Transforming growth factor beta-1 (TGF-beta-1) and Latency-associated peptide (LAP) chains, which remain non-covalently linked, rendering TGF-beta-1 inactive.

It is found in the secreted. The protein resides in the extracellular space. It localises to the extracellular matrix. Its function is as follows. Transforming growth factor beta-1 proprotein: Precursor of the Latency-associated peptide (LAP) and Transforming growth factor beta-1 (TGF-beta-1) chains, which constitute the regulatory and active subunit of TGF-beta-1, respectively. Functionally, required to maintain the Transforming growth factor beta-1 (TGF-beta-1) chain in a latent state during storage in extracellular matrix. Associates non-covalently with TGF-beta-1 and regulates its activation via interaction with 'milieu molecules', such as LTBP1, LRRC32/GARP and LRRC33/NRROS, that control activation of TGF-beta-1. Interaction with integrins (ITGAV:ITGB6 or ITGAV:ITGB8) results in distortion of the Latency-associated peptide chain and subsequent release of the active TGF-beta-1. In terms of biological role, transforming growth factor beta-1: Multifunctional protein that regulates the growth and differentiation of various cell types and is involved in various processes, such as normal development, immune function, microglia function and responses to neurodegeneration. Activation into mature form follows different steps: following cleavage of the proprotein in the Golgi apparatus, Latency-associated peptide (LAP) and Transforming growth factor beta-1 (TGF-beta-1) chains remain non-covalently linked rendering TGF-beta-1 inactive during storage in extracellular matrix. At the same time, LAP chain interacts with 'milieu molecules', such as LTBP1, LRRC32/GARP and LRRC33/NRROS that control activation of TGF-beta-1 and maintain it in a latent state during storage in extracellular milieus. TGF-beta-1 is released from LAP by integrins (ITGAV:ITGB6 or ITGAV:ITGB8): integrin-binding to LAP stabilizes an alternative conformation of the LAP bowtie tail and results in distortion of the LAP chain and subsequent release of the active TGF-beta-1. Once activated following release of LAP, TGF-beta-1 acts by binding to TGF-beta receptors (TGFBR1 and TGFBR2), which transduce signal. While expressed by many cells types, TGF-beta-1 only has a very localized range of action within cell environment thanks to fine regulation of its activation by Latency-associated peptide chain (LAP) and 'milieu molecules'. Plays an important role in bone remodeling: acts as a potent stimulator of osteoblastic bone formation. Can promote either T-helper 17 cells (Th17) or regulatory T-cells (Treg) lineage differentiation in a concentration-dependent manner. Can induce epithelial-to-mesenchymal transition (EMT) and cell migration in various cell types. This Gallus gallus (Chicken) protein is Transforming growth factor beta-1 proprotein (TGFB1).